Reading from the N-terminus, the 525-residue chain is GMP synthase [glutamine-hydrolyzing] (525 aa).

The Glutamine amidotransferase type-1 domain maps to 9–207 (RILILDFGSQ…VLTISGCEAL (199 aa)). Cys-86 (nucleophile) is an active-site residue. Active-site residues include His-181 and Glu-183. The GMPS ATP-PPase domain occupies 208–400 (WTPAKIVDDA…LGLPYDMVYR (193 aa)). 235–241 (SGGVDSS) is an ATP binding site.

As to quaternary structure, homodimer.

The enzyme catalyses XMP + L-glutamine + ATP + H2O = GMP + L-glutamate + AMP + diphosphate + 2 H(+). Its pathway is purine metabolism; GMP biosynthesis; GMP from XMP (L-Gln route): step 1/1. Catalyzes the synthesis of GMP from XMP. This is GMP synthase [glutamine-hydrolyzing] from Marinobacter nauticus (strain ATCC 700491 / DSM 11845 / VT8) (Marinobacter aquaeolei).